A 313-amino-acid chain; its full sequence is R2-like ligand binding oxidase (313 aa).

Residues Glu-68, Glu-101, and His-104 each contribute to the Mn(2+) site. The segment at residues Val-71–Tyr-162 is a cross-link (3-(O4'-tyrosyl)-valine (Val-Tyr)). Position 101 (Glu-101) interacts with Fe cation. 3 residues coordinate Fe cation: Glu-167, Glu-202, and His-205.

Belongs to the ribonucleoside diphosphate reductase small chain family. R2-like ligand binding oxidase subfamily. In terms of assembly, homodimer. Requires Fe cation as cofactor. It depends on Mn(2+) as a cofactor.

Functionally, probable oxidase that might be involved in lipid metabolism. This is R2-like ligand binding oxidase from Mycobacteroides abscessus (strain ATCC 19977 / DSM 44196 / CCUG 20993 / CIP 104536 / JCM 13569 / NCTC 13031 / TMC 1543 / L948) (Mycobacterium abscessus).